The chain runs to 444 residues: Sperm-associated antigen 4 protein (444 aa).

The interval methionine 1–proline 109 is disordered. Over residues asparagine 19–serine 36 the composition is skewed to low complexity. Transmembrane regions (helical) follow at residues phenylalanine 137–valine 159 and isoleucine 166–leucine 188. Residues leucine 204–glutamate 241 adopt a coiled-coil conformation. Residues glycine 267–isoleucine 428 form the SUN domain.

In terms of assembly, self-associates. Interacts with ODF1. May associate with microtubules. Interacts with SUN3 and SYNE1; suggesting the formation of a LINC complexs; a SUN domain-based heterotrimer of SPAG4 and SUN3 may associate with SYNE1. Interacts with SEPT12 and LMNB1; during spermatogenesis. In terms of tissue distribution, testis specific. Exclusively expressed in spermatids.

It is found in the membrane. The protein localises to the cytoplasm. It localises to the cytoskeleton. The protein resides in the flagellum axoneme. Its subcellular location is the nucleus envelope. It is found in the nucleus inner membrane. Involved in spermatogenesis. Required for sperm head formation but not required to establish and maintain general polarity of the sperm head. Required for anchoring and organization of the manchette. Required for targeting of SUN3 and probably SYNE1 through a probable SUN1:SYNE3 LINC complex to the nuclear envelope and involved in accurate posterior sperm head localization of the complex. May anchor SUN3 the nuclear envelope. Involved in maintenance of the nuclear envelope integrity. May assist the organization and assembly of outer dense fibers (ODFs), a specific structure of the sperm tail. In Rattus norvegicus (Rat), this protein is Sperm-associated antigen 4 protein (Spag4).